A 267-amino-acid chain; its full sequence is Imidazole glycerol phosphate synthase subunit HisF (267 aa).

Residues aspartate 22 and aspartate 141 contribute to the active site.

The protein belongs to the HisA/HisF family. As to quaternary structure, heterodimer of HisH and HisF.

The protein localises to the cytoplasm. It carries out the reaction 5-[(5-phospho-1-deoxy-D-ribulos-1-ylimino)methylamino]-1-(5-phospho-beta-D-ribosyl)imidazole-4-carboxamide + L-glutamine = D-erythro-1-(imidazol-4-yl)glycerol 3-phosphate + 5-amino-1-(5-phospho-beta-D-ribosyl)imidazole-4-carboxamide + L-glutamate + H(+). It functions in the pathway amino-acid biosynthesis; L-histidine biosynthesis; L-histidine from 5-phospho-alpha-D-ribose 1-diphosphate: step 5/9. Its function is as follows. IGPS catalyzes the conversion of PRFAR and glutamine to IGP, AICAR and glutamate. The HisF subunit catalyzes the cyclization activity that produces IGP and AICAR from PRFAR using the ammonia provided by the HisH subunit. In Mycobacterium tuberculosis (strain ATCC 25177 / H37Ra), this protein is Imidazole glycerol phosphate synthase subunit HisF.